A 603-amino-acid polypeptide reads, in one-letter code: Aspartate--tRNA(Asp/Asn) ligase (603 aa).

The segment at 205-208 (QLFK) is aspartate. Arg227 serves as a coordination point for L-aspartate. Residues 227 to 229 (RDE) and Gln236 each bind ATP. An L-aspartate-binding site is contributed by His463. Residue Glu497 coordinates ATP. Arg504 is a binding site for L-aspartate. 549–552 (GMDR) is an ATP binding site.

This sequence belongs to the class-II aminoacyl-tRNA synthetase family. Type 1 subfamily. Homodimer.

It localises to the cytoplasm. It catalyses the reaction tRNA(Asx) + L-aspartate + ATP = L-aspartyl-tRNA(Asx) + AMP + diphosphate. In terms of biological role, aspartyl-tRNA synthetase with relaxed tRNA specificity since it is able to aspartylate not only its cognate tRNA(Asp) but also tRNA(Asn). Reaction proceeds in two steps: L-aspartate is first activated by ATP to form Asp-AMP and then transferred to the acceptor end of tRNA(Asp/Asn). This chain is Aspartate--tRNA(Asp/Asn) ligase, found in Anaeromyxobacter sp. (strain K).